The sequence spans 610 residues: E-selectin (610 aa).

An N-terminal signal peptide occupies residues 1-21 (MIASQFLSALTLVLLIKESGA). Residues 22–139 (WSYNTSTEAM…CSKKKLALCY (118 aa)) enclose the C-type lectin domain. The Extracellular segment spans residues 22–556 (WSYNTSTEAM…CEAPTESNIP (535 aa)). Asn-25 carries N-linked (GlcNAc...) asparagine glycosylation. 5 cysteine pairs are disulfide-bonded: Cys-40–Cys-138, Cys-111–Cys-130, Cys-143–Cys-154, Cys-148–Cys-163, and Cys-165–Cys-174. The Ca(2+) site is built by Glu-101, Asn-103, and Glu-109. Residues 101–109 (EPNNRQKDE), 113–118 (EIYIKR), and 126–128 (NDE) each bind a carbohydrate. 2 residues coordinate Ca(2+): Asn-126 and Asp-127. The EGF-like domain maps to 140 to 175 (TAACTNTSCSGHGECVETINNYTCKCDPGFSGLKCE). Asn-145 and Asn-160 each carry an N-linked (GlcNAc...) asparagine glycan. Sushi domains follow at residues 178-239 (VNCT…ACNV), 240-301 (VECD…TCKA), 303-364 (TCRA…VCEA), 366-427 (QCTA…TCEA), 429-490 (RCDA…SCQV), and 491-549 (VKCS…TCEA). 3 N-linked (GlcNAc...) asparagine glycosylation sites follow: Asn-179, Asn-199, and Asn-203. Disulfide bonds link Cys-180/Cys-224, Cys-193/Cys-206, Cys-210/Cys-237, Cys-242/Cys-286, Cys-255/Cys-268, Cys-272/Cys-299, Cys-304/Cys-349, Cys-335/Cys-362, Cys-367/Cys-412, Cys-398/Cys-425, Cys-430/Cys-475, Cys-461/Cys-488, Cys-493/Cys-534, and Cys-520/Cys-547. Asn-265 carries an N-linked (GlcNAc...) asparagine glycan. Residues Asn-312 and Asn-332 are each glycosylated (N-linked (GlcNAc...) asparagine). N-linked (GlcNAc...) asparagine glycosylation is found at Asn-503 and Asn-527. A helical membrane pass occupies residues 557–578 (LVAGLSAAGLSLLTLAPFLLWL). Over 579–610 (RKCLRKAKKFVPASSCQSLESDGSYQKPSYIL) the chain is Cytoplasmic.

This sequence belongs to the selectin/LECAM family. In terms of assembly, interacts with SELPLG/PSGL1 and PODXL2 through the sialyl Lewis X epitope. SELPLG sulfation appears not to be required for this interaction.

It is found in the cell membrane. In terms of biological role, cell-surface glycoprotein having a role in immunoadhesion. Mediates in the adhesion of blood neutrophils in cytokine-activated endothelium through interaction with SELPLG/PSGL1. May have a role in capillary morphogenesis. This Homo sapiens (Human) protein is E-selectin (SELE).